The following is a 396-amino-acid chain: uncharacterized protein (396 aa).

This is an uncharacterized protein from Pseudomonas amyloderamosa.